Consider the following 306-residue polypeptide: Glutaminase (306 aa).

7 residues coordinate substrate: S64, N115, E159, N166, Y190, Y242, and V260.

This sequence belongs to the glutaminase family. As to quaternary structure, homotetramer.

It catalyses the reaction L-glutamine + H2O = L-glutamate + NH4(+). This Aeromonas hydrophila subsp. hydrophila (strain ATCC 7966 / DSM 30187 / BCRC 13018 / CCUG 14551 / JCM 1027 / KCTC 2358 / NCIMB 9240 / NCTC 8049) protein is Glutaminase.